The following is a 594-amino-acid chain: Aspartate--tRNA(Asp/Asn) ligase (594 aa).

Glutamate 175 is a binding site for L-aspartate. Residues 199–202 (QLFK) are aspartate. Arginine 221 contacts L-aspartate. ATP contacts are provided by residues 221 to 223 (RDE) and glutamine 230. Residue histidine 446 coordinates L-aspartate. Glutamate 491 is an ATP binding site. Arginine 498 provides a ligand contact to L-aspartate. 543–546 (GLDR) is an ATP binding site.

Belongs to the class-II aminoacyl-tRNA synthetase family. Type 1 subfamily. Homodimer.

The protein localises to the cytoplasm. The catalysed reaction is tRNA(Asx) + L-aspartate + ATP = L-aspartyl-tRNA(Asx) + AMP + diphosphate. In terms of biological role, aspartyl-tRNA synthetase with relaxed tRNA specificity since it is able to aspartylate not only its cognate tRNA(Asp) but also tRNA(Asn). Reaction proceeds in two steps: L-aspartate is first activated by ATP to form Asp-AMP and then transferred to the acceptor end of tRNA(Asp/Asn). This chain is Aspartate--tRNA(Asp/Asn) ligase, found in Thermodesulfovibrio yellowstonii (strain ATCC 51303 / DSM 11347 / YP87).